A 150-amino-acid chain; its full sequence is MKAKINFLNQSRIKFKYLKLFRKIFKLLVEKEQITGEISLDLMLITQRKAQKLAIKFKNINYIPDVLSFPSNLIIAKKNFRLHFLGEIFMTPAKIIKQANEYGHSEEREFSYLFVHSIYHLLGFDHQDEKTNKLMDEKVENILINLGINR.

Positions 116, 120, and 126 each coordinate Zn(2+).

It belongs to the endoribonuclease YbeY family. The cofactor is Zn(2+).

It is found in the cytoplasm. Functionally, single strand-specific metallo-endoribonuclease involved in late-stage 70S ribosome quality control and in maturation of the 3' terminus of the 16S rRNA. In Mesomycoplasma hyopneumoniae (strain 232) (Mycoplasma hyopneumoniae), this protein is Endoribonuclease YbeY.